Here is a 491-residue protein sequence, read N- to C-terminus: Serine hydroxymethyltransferase (491 aa).

Residues leucine 173 and 177–179 contribute to the (6S)-5,6,7,8-tetrahydrofolate site; that span reads GHL. At lysine 285 the chain carries N6-(pyridoxal phosphate)lysine.

Belongs to the SHMT family. As to quaternary structure, homodimer. Pyridoxal 5'-phosphate is required as a cofactor.

It is found in the cytoplasm. The enzyme catalyses (6R)-5,10-methylene-5,6,7,8-tetrahydrofolate + glycine + H2O = (6S)-5,6,7,8-tetrahydrofolate + L-serine. It participates in one-carbon metabolism; tetrahydrofolate interconversion. Its pathway is amino-acid biosynthesis; glycine biosynthesis; glycine from L-serine: step 1/1. Catalyzes the reversible interconversion of serine and glycine with tetrahydrofolate (THF) serving as the one-carbon carrier. This reaction serves as the major source of one-carbon groups required for the biosynthesis of purines, thymidylate, methionine, and other important biomolecules. Also exhibits THF-independent aldolase activity toward beta-hydroxyamino acids, producing glycine and aldehydes, via a retro-aldol mechanism. This Cutibacterium acnes (strain DSM 16379 / KPA171202) (Propionibacterium acnes) protein is Serine hydroxymethyltransferase.